The sequence spans 514 residues: L-threonine dehydratase biosynthetic IlvA (514 aa).

Lys62 is modified (N6-(pyridoxal phosphate)lysine). Pyridoxal 5'-phosphate contacts are provided by residues Asn89, 188 to 192 (GGGGL), and Ser315. 2 consecutive ACT-like domains span residues 339-411 (ALLA…DLSD) and 434-504 (RLYS…DETN).

It belongs to the serine/threonine dehydratase family. Homotetramer. Pyridoxal 5'-phosphate is required as a cofactor.

The enzyme catalyses L-threonine = 2-oxobutanoate + NH4(+). It functions in the pathway amino-acid biosynthesis; L-isoleucine biosynthesis; 2-oxobutanoate from L-threonine: step 1/1. Its activity is regulated as follows. Isoleucine allosterically inhibits whereas valine allosterically activates this enzyme. Catalyzes the anaerobic formation of alpha-ketobutyrate and ammonia from threonine in a two-step reaction. The first step involved a dehydration of threonine and a production of enamine intermediates (aminocrotonate), which tautomerizes to its imine form (iminobutyrate). Both intermediates are unstable and short-lived. The second step is the nonenzymatic hydrolysis of the enamine/imine intermediates to form 2-ketobutyrate and free ammonia. In the low water environment of the cell, the second step is accelerated by RidA. The protein is L-threonine dehydratase biosynthetic IlvA (ilvA) of Escherichia coli (strain K12).